The following is a 265-amino-acid chain: Arcelin-1 (265 aa).

Residues 1 to 21 form the signal peptide; sequence MASSNLLTLALFLVLLTHANS. 3 N-linked (GlcNAc...) asparagine glycosylation sites follow: N33, N89, and N128. C165 and C201 form a disulfide bridge.

Belongs to the leguminous lectin family. In terms of assembly, homodimer.

Seed storage. This carbohydrate-binding lectin has toxic effects on an important bean bruchid pest, Z.subfasciatus. Antibiosis properties of legume lectins are proposed to be due to the lysis of epithelial cells of the intestine by binding to the carbohydrate moieties of these proteins. This Phaseolus vulgaris (Kidney bean) protein is Arcelin-1 (ARC1).